Here is a 455-residue protein sequence, read N- to C-terminus: MLPSQSPAIFTVSRLNQTVRLLLEHEMGQVWISGEISNFTQPASGHWYFTLKDDNAQVRCAMFRNSNRRVTFRPQHGQQVLVRANITLYEPRGDYQIIVESMQPAGEGLLQQKYEQLKAKLQAEGLFDQQLKKTLPSPAHCVGVITSKTGAALHDILHVLKRRDPSLPVIIYPTAVQGDDAPGQIVRAIELANLRNECDVLIVGRGGGSLEDLWSFNDERVARGIFASRIPVVSAVGHETDVTIADFVADLRAPTPSAAAEVVSRNQQELLRQVQSAQQRLEMAMDYYLANRTRRFTQIHHRLQQQHPQLRLARQQTTLERLQKRMSFALENQLKRAGQQQQRLTLRLNQQNPQPKIHRAQTRVQQLEYRLAENLRAQLSAMRERFGNTVTHLEAVSPLSTLARGYSVTSAADGAVLKQVKQVKVGETLTTRLGDGVVISEVSAVTKSRKPRKKN.

Belongs to the XseA family. As to quaternary structure, heterooligomer composed of large and small subunits.

The protein localises to the cytoplasm. The enzyme catalyses Exonucleolytic cleavage in either 5'- to 3'- or 3'- to 5'-direction to yield nucleoside 5'-phosphates.. Its function is as follows. Bidirectionally degrades single-stranded DNA into large acid-insoluble oligonucleotides, which are then degraded further into small acid-soluble oligonucleotides. In Escherichia fergusonii (strain ATCC 35469 / DSM 13698 / CCUG 18766 / IAM 14443 / JCM 21226 / LMG 7866 / NBRC 102419 / NCTC 12128 / CDC 0568-73), this protein is Exodeoxyribonuclease 7 large subunit.